The following is a 1402-amino-acid chain: Eukaryotic translation initiation factor 4 gamma 1 (1402 aa).

Disordered regions lie at residues 1-123 (MSGA…SPEP) and 165-402 (HEPN…YEYK). 2 positions are modified to phosphothreonine: Thr11 and Thr27. Residues 53 to 64 (GPEHSPSESQPS) show a composition bias toward low complexity. Residues 65 to 76 (SPSPTPSPPPIL) are compositionally biased toward pro residues. Phosphoserine is present on Ser120. A compositionally biased stretch (low complexity) spans 238–251 (ASATPPAVPSATPA). Acidic residues predominate over residues 261–275 (QEEEGEEEEEEEEGE). Basic and acidic residues-rich tracts occupy residues 280-290 (ESDKGGEDLHP) and 324-340 (KELNKKEAVGDLLDAFK). Positions 359–370 (PTPESEGSSGPS) are enriched in low complexity. Residues 379-388 (WDAKEDKIHN) show a composition bias toward basic and acidic residues. A Phosphothreonine modification is found at Thr452. 4 disordered regions span residues 476 to 517 (ANLG…PPKG), 536 to 563 (AEKAWKPSSKRTAADKDRGEEDADGSKT), 600 to 636 (SKGSLTSSLRRPFQNPTSQWPSQHVPLPHGAESATTE), and 828 to 1028 (MAKG…KREA). Residues 479-488 (GRPALSSRGP) are compositionally biased toward low complexity. Omega-N-methylarginine is present on residues Arg490 and Arg499. Basic and acidic residues predominate over residues 547–563 (TAADKDRGEEDADGSKT). The MIF4G domain occupies 567 to 793 (FRRVRSILNK…QDVLDLRQSN (227 aa)). Residues 602–621 (GSLTSSLRRPFQNPTSQWPS) show a composition bias toward polar residues. The residue at position 832 (Ser832) is a Phosphoserine. An omega-N-methylarginine mark is found at Arg836 and Arg846. Phosphoserine is present on residues Ser881 and Ser896. The span at 892–913 (GGRLSWGKGSSGSGAKPSDAAS) shows a compositional bias: low complexity. N6-acetyllysine is present on Lys899. A compositionally biased stretch (polar residues) spans 918–937 (PATSTLNRFSALQQAVPTES). Residues Ser948 and Ser950 each carry the phosphoserine modification. Basic and acidic residues predominate over residues 949–981 (LSRERGGKAGEPRRRLERSERGGDRGDRLDRAR). Ser988 is modified (phosphoserine; by PKC/PRKCA). Residues 989-1028 (FSKEVEERSRERPSQPEGLRKAASLTEDRDRGRDAAKREA) are compositionally biased toward basic and acidic residues. Residues Ser990, Ser997, and Ser1012 each carry the phosphoserine modification. Thr1014 is subject to Phosphothreonine. 2 positions are modified to phosphoserine: Ser1034 and Ser1041. The region spanning 1044-1166 (ELEKKSKAII…PMGELFREIT (123 aa)) is the MI domain. Positions 1231-1401 (EESEAPGQRA…REVEEEESDH (171 aa)) constitute a W2 domain. At Ser1399 the chain carries Phosphoserine.

The protein belongs to the eukaryotic initiation factor 4G family. EIF4F is a multi-subunit complex, the composition of which varies with external and internal environmental conditions. It is composed of at least EIF4A, EIF4E (cap-binding) and EIF4G1/EIF4G3. Interacts with eIF3 complex, mutually exclusive with EIF4A1 or EIF4A2, EIF4E and through its N-terminus with PABPC1. Interacts with EIF4E or with EIF1 (mutually exclusive) through a common binding site. Interacts through its C-terminus with the serine/threonine kinases MKNK1, and with MKNK2. Appears to act as a scaffold protein, holding these enzymes in place to phosphorylate EIF4E. Non-phosphorylated EIF4EBP1 competes with EIF4G1/EIF4G3 to interact with EIF4E; insulin stimulated MAP-kinase (MAPK1 and MAPK3) phosphorylation of EIF4EBP1 causes dissociation of the complex allowing EIF4G1/EIF4G3 to bind and consequent initiation of translation. EIF4G1/EIF4G3 interacts with PABPC1 to bring about circularization of the mRNA. Interacts with EIF4E3. Interacts with CIRBP and MIF4GD. Interacts with RBM4. Interacts with HNRNPD/AUF1; the interaction requires RNA. Interacts with DDX3X; the interaction requires RNA. Interacts with DAZAP2. Phosphorylated at multiple sites in vivo. Phosphorylation at Ser-988 by PRKCA induces binding to MKNK1.

It localises to the cytoplasm. The protein resides in the nucleus. Its subcellular location is the stress granule. Its function is as follows. Component of the protein complex eIF4F, which is involved in the recognition of the mRNA cap, ATP-dependent unwinding of 5'-terminal secondary structure and recruitment of mRNA to the ribosome. Exists in two complexes, either with EIF1 or with EIF4E (mutually exclusive). Together with EIF1, is required for leaky scanning, in particular for avoiding cap-proximal start codon. Together with EIF4E, antagonizes the scanning promoted by EIF1-EIF4G1 and locates the start codon (through a TISU element) without scanning. As a member of the eIF4F complex, required for endoplasmic reticulum stress-induced ATF4 mRNA translation. The chain is Eukaryotic translation initiation factor 4 gamma 1 (EIF4G1) from Oryctolagus cuniculus (Rabbit).